A 398-amino-acid polypeptide reads, in one-letter code: NADH-quinone oxidoreductase subunit D (398 aa).

This sequence belongs to the complex I 49 kDa subunit family. NDH-1 is composed of 14 different subunits. Subunits NuoB, C, D, E, F, and G constitute the peripheral sector of the complex.

It localises to the cell inner membrane. The enzyme catalyses a quinone + NADH + 5 H(+)(in) = a quinol + NAD(+) + 4 H(+)(out). In terms of biological role, NDH-1 shuttles electrons from NADH, via FMN and iron-sulfur (Fe-S) centers, to quinones in the respiratory chain. The immediate electron acceptor for the enzyme in this species is believed to be ubiquinone. Couples the redox reaction to proton translocation (for every two electrons transferred, four hydrogen ions are translocated across the cytoplasmic membrane), and thus conserves the redox energy in a proton gradient. The polypeptide is NADH-quinone oxidoreductase subunit D (Rhodospirillum centenum (strain ATCC 51521 / SW)).